Here is a 219-residue protein sequence, read N- to C-terminus: Small ribosomal subunit protein uS3 (219 aa).

Residues 38–106 form the KH type-2 domain; sequence IRTYLKKKLY…KLNLEIKEIK (69 aa).

Belongs to the universal ribosomal protein uS3 family. As to quaternary structure, part of the 30S ribosomal subunit. Forms a tight complex with proteins S10 and S14.

Its function is as follows. Binds the lower part of the 30S subunit head. Binds mRNA in the 70S ribosome, positioning it for translation. The polypeptide is Small ribosomal subunit protein uS3 (Lachnoclostridium phytofermentans (strain ATCC 700394 / DSM 18823 / ISDg) (Clostridium phytofermentans)).